Reading from the N-terminus, the 265-residue chain is Elongation factor 1-delta (265 aa).

Positions 31 to 54 (MGSASNKPHNSPQSAASALSNSGD) are enriched in polar residues. Disordered stretches follow at residues 31-64 (MGSASNKPHNSPQSAASALSNSGDGSELAARVAN) and 118-155 (KVQVTPAAKEENGTGEDDDDDDDIDLFGSDNEEEDAEA). Positions 130 to 153 (GTGEDDDDDDDIDLFGSDNEEEDA) are enriched in acidic residues.

This sequence belongs to the EF-1-beta/EF-1-delta family. As to quaternary structure, EF-1 is composed of 4 subunits: alpha, beta, delta, and gamma.

EF-1-beta and EF-1-delta stimulate the exchange of GDP bound to EF-1-alpha to GTP. The sequence is that of Elongation factor 1-delta (eef1d) from Xenopus laevis (African clawed frog).